We begin with the raw amino-acid sequence, 68 residues long: MNEFEKWIEGRYEPHEQKQKEHEDTMGSIRKDLDAFDKAGLEFEDEIEELAEKTEALLKKHQAQYDQS.

The interval 1-27 (MNEFEKWIEGRYEPHEQKQKEHEDTMG) is disordered.

This is an uncharacterized protein from Bacillus subtilis (strain 168).